The primary structure comprises 106 residues: Valine dehydrogenase (106 aa).

The active site involves Lys-91.

The protein belongs to the Glu/Leu/Phe/Val dehydrogenases family. In terms of assembly, homodimer.

It is found in the cytoplasm. The enzyme catalyses L-valine + NAD(+) + H2O = 3-methyl-2-oxobutanoate + NH4(+) + NADH + H(+). It functions in the pathway amino-acid degradation; L-valine degradation. Its function is as follows. Oxidative deamination of branched-chain amino acids. The catabolism of valine is the major source of fatty acid precursors for macrolide biosynthesis and a vital source of antibiotic precursors. The sequence is that of Valine dehydrogenase (vdh) from Streptomyces ambofaciens.